The following is a 229-amino-acid chain: Heptaprenylglyceryl phosphate synthase (229 aa).

Sn-glycerol 1-phosphate is bound at residue Lys-12. Positions 14 and 40 each coordinate Mg(2+). Residues 159 to 164 (YLEYSG), Gly-189, and 209 to 210 (GN) each bind sn-glycerol 1-phosphate.

The protein belongs to the GGGP/HepGP synthase family. Group I subfamily. As to quaternary structure, homodimer. The cofactor is Mg(2+).

The catalysed reaction is sn-glycerol 1-phosphate + all-trans-heptaprenyl diphosphate = 3-heptaprenyl-sn-glycero-1-phosphate + diphosphate. It functions in the pathway membrane lipid metabolism; glycerophospholipid metabolism. In terms of biological role, prenyltransferase that catalyzes in vivo the transfer of the heptaprenyl moiety of heptaprenyl pyrophosphate (HepPP; 35 carbon atoms) to the C3 hydroxyl of sn-glycerol-1-phosphate (G1P), producing heptaprenylglyceryl phosphate (HepGP). This reaction is an ether-bond-formation step in the biosynthesis of archaea-type G1P-based membrane lipids found in Bacillales. This is Heptaprenylglyceryl phosphate synthase from Bacillus cereus (strain ATCC 10987 / NRS 248).